The primary structure comprises 88 residues: Class II hydrophobin 1 (88 aa).

A signal peptide spans 1–15 (MKFFIATIFATGALA). Cystine bridges form between Cys-19-Cys-69, Cys-29-Cys-59, Cys-30-Cys-42, and Cys-70-Cys-81.

It belongs to the cerato-ulmin hydrophobin family. Homodimer. Homodimers further self-assemble to form highly ordered films at water-air interfaces through intermolecular interactions.

Its subcellular location is the secreted. It is found in the cell wall. Its function is as follows. Aerial growth, conidiation, and dispersal of filamentous fungi in the environment rely upon a capability of their secreting small amphipathic proteins called hydrophobins (HPBs) with low sequence identity. Class I can self-assemble into an outermost layer of rodlet bundles on aerial cell surfaces, conferring cellular hydrophobicity that supports fungal growth, development and dispersal; whereas Class II form highly ordered films at water-air interfaces through intermolecular interactions but contribute nothing to the rodlet structure. This is Class II hydrophobin 1 from Trichoderma asperellum (strain ATCC 204424 / CBS 433.97 / NBRC 101777).